The primary structure comprises 210 residues: Ribulose-phosphate 3-epimerase (210 aa).

Residue Ser-9 coordinates substrate. Positions 34, 36, and 68 each coordinate a divalent metal cation. Asp-36 (proton acceptor) is an active-site residue. Substrate is bound by residues His-68, 144–147, 177–179, and 199–200; these read GFGG, DGG, and GS. An a divalent metal cation-binding site is contributed by Asp-177. Catalysis depends on Asp-177, which acts as the Proton donor.

This sequence belongs to the ribulose-phosphate 3-epimerase family. Requires a divalent metal cation as cofactor.

It carries out the reaction D-ribulose 5-phosphate = D-xylulose 5-phosphate. It functions in the pathway carbohydrate degradation. In terms of biological role, catalyzes the reversible epimerization of D-ribulose 5-phosphate to D-xylulose 5-phosphate. The protein is Ribulose-phosphate 3-epimerase of Serratia marcescens.